Reading from the N-terminus, the 440-residue chain is Xaa-Pro dipeptidase (440 aa).

Aspartate 244, aspartate 255, histidine 336, glutamate 381, and glutamate 420 together coordinate Mn(2+).

The protein belongs to the peptidase M24B family. Requires Mn(2+) as cofactor. The N-terminus is blocked.

The catalysed reaction is Xaa-L-Pro dipeptide + H2O = an L-alpha-amino acid + L-proline. The enzyme catalyses diisopropyl fluorophosphate + H2O = diisopropyl phosphate + fluoride + 2 H(+). Functionally, splits dipeptides with a prolyl or hydroxyprolyl residue in the C-terminal position and a nonpolar amino acid at the N-terminal position. Also catalyzes the hydrolysis of toxic organophosphorus cholinesterase-inhibiting compounds including nerve gases such as diisopropylfluorophosphate (DFP), O-isopropyl methylphosphonofluoridate (sarin), O-pinacolyl methylphosphonofluoridate (soman), and O-cyclohexyl methylphosphonofluoridate. This chain is Xaa-Pro dipeptidase (pepQ), found in Pseudoalteromonas haloplanktis (Alteromonas haloplanktis).